Consider the following 415-residue polypeptide: Levansucrase (415 aa).

Sucrose is bound by residues tryptophan 45, aspartate 46, alanine 132, arginine 202, and aspartate 203. Aspartate 46 serves as the catalytic Nucleophile. Glutamate 287 acts as the Proton donor/acceptor in catalysis.

It belongs to the glycosyl hydrolase 68 family.

The protein localises to the secreted. It catalyses the reaction [6)-beta-D-fructofuranosyl-(2-&gt;](n) alpha-D-glucopyranoside + sucrose = [6)-beta-D-fructofuranosyl-(2-&gt;](n+1) alpha-D-glucopyranoside + D-glucose. Functionally, catalyzes the synthesis of levan, a fructose polymer, by transferring the fructosyl moiety from sucrose to a growing acceptor molecule. The chain is Levansucrase from Erwinia amylovora (Fire blight bacteria).